Consider the following 388-residue polypeptide: MAFQLTPLRVALVAGEPSGDLLGASLLGGLHARLPASSRYYGIGGPRMSAVEFDAHWPMEKLAVRGYVEALKHIPEILRIRGELKRQLFAEPPDAFVGIDAPDFNFGLEQALRGAGIPTIHFVCPSIWAWRGGRIKKIVKAVDHMLCLFPFEPELLEKAGVAATFVGHPLADEIPLEPDTHGARIALGLPGGGPVIAVLPGSRRSEIELIGPTFFDAMELMQQREPGVRFVVPAATPALRALLQPLVDAHPSLSVTLTEGRAQVAMTAADAILVKSGTVTLEAALLKKPMVISYKVPWLTGQIMRRQGYLPYVGLPNILAGRFVVPELLQHFATPDALADATLTQLRDDANRRALADIFTDMHLALRQNTAQRAAEAVAHVIDSRKPR.

It belongs to the LpxB family.

The enzyme catalyses a lipid X + a UDP-2-N,3-O-bis[(3R)-3-hydroxyacyl]-alpha-D-glucosamine = a lipid A disaccharide + UDP + H(+). The protein operates within bacterial outer membrane biogenesis; LPS lipid A biosynthesis. In terms of biological role, condensation of UDP-2,3-diacylglucosamine and 2,3-diacylglucosamine-1-phosphate to form lipid A disaccharide, a precursor of lipid A, a phosphorylated glycolipid that anchors the lipopolysaccharide to the outer membrane of the cell. This Burkholderia mallei (strain NCTC 10247) protein is Lipid-A-disaccharide synthase.